Consider the following 177-residue polypeptide: ATP synthase subunit delta (177 aa).

It belongs to the ATPase delta chain family. F-type ATPases have 2 components, F(1) - the catalytic core - and F(0) - the membrane proton channel. F(1) has five subunits: alpha(3), beta(3), gamma(1), delta(1), epsilon(1). F(0) has three main subunits: a(1), b(2) and c(10-14). The alpha and beta chains form an alternating ring which encloses part of the gamma chain. F(1) is attached to F(0) by a central stalk formed by the gamma and epsilon chains, while a peripheral stalk is formed by the delta and b chains.

It localises to the cell inner membrane. Functionally, f(1)F(0) ATP synthase produces ATP from ADP in the presence of a proton or sodium gradient. F-type ATPases consist of two structural domains, F(1) containing the extramembraneous catalytic core and F(0) containing the membrane proton channel, linked together by a central stalk and a peripheral stalk. During catalysis, ATP synthesis in the catalytic domain of F(1) is coupled via a rotary mechanism of the central stalk subunits to proton translocation. In terms of biological role, this protein is part of the stalk that links CF(0) to CF(1). It either transmits conformational changes from CF(0) to CF(1) or is implicated in proton conduction. The protein is ATP synthase subunit delta of Klebsiella pneumoniae subsp. pneumoniae (strain ATCC 700721 / MGH 78578).